Consider the following 66-residue polypeptide: Brevinin-1CDYd (66 aa).

The signal sequence occupies residues 1-22 (MFTLKKSLLILFFLGTINFSLC). Positions 23–44 (EEERNAEEERRDDPEERDVEVE) are excised as a propeptide. A disulfide bridge links Cys-60 with Cys-66.

This sequence belongs to the frog skin active peptide (FSAP) family. Brevinin subfamily. In terms of tissue distribution, expressed by the skin glands.

The protein resides in the secreted. Antimicrobial peptide. The chain is Brevinin-1CDYd from Rana dybowskii (Dybovsky's frog).